The chain runs to 1108 residues: Retinal guanylyl cyclase 2 (1108 aa).

The N-terminal stretch at 1–50 (MFLGLGRFSRLVLWFAAFRKLLGHHGLASAKFLWCLCLLSVMSLPQQVWT) is a signal peptide. The Extracellular portion of the chain corresponds to 51–467 (LPYKIGVVGP…KICHGGIDPA (417 aa)). A disulfide bond links Cys-104 and Cys-132. The chain crosses the membrane as a helical span at residues 468-490 (FAMMVCLTLLIALLSINGFAYFI). Over 491 to 1108 (RRRINKIQLI…AERQLVRNKP (618 aa)) the chain is Cytoplasmic. Positions 532–812 (FQITSEVQSG…DEIFNQFKTF (281 aa)) constitute a Protein kinase domain. A Guanylate cyclase domain is found at 884-1014 (TLYFSDIVGF…DTVNTASRME (131 aa)).

This sequence belongs to the adenylyl cyclase class-4/guanylyl cyclase family. As to quaternary structure, homodimer. Interacts with RD3; promotes the exit of GUCY2F from the endoplasmic reticulum and its trafficking to the photoreceptor outer segments. Post-translationally, there are 9 conserved cysteine residues in sensory guanylate cyclases, 6 in the extracellular domain, which may be involved in intra- or interchain disulfide bonds. Retina. Localized exclusively in the outer nuclear layer and inner segments of the rod and cone photoreceptor cells.

It is found in the photoreceptor outer segment membrane. The enzyme catalyses GTP = 3',5'-cyclic GMP + diphosphate. Its activity is regulated as follows. Activated by GUCA1B when free calcium ions concentration is low, and inhibited by GUCA1B when free calcium ions concentration is high. Inhibited by RD3. Responsible for the synthesis of cyclic GMP (cGMP) in rods and cones of photoreceptors. Plays an essential role in phototransduction, by mediating cGMP replenishment. May also participate in the trafficking of membrane-asociated proteins to the photoreceptor outer segment membrane. The sequence is that of Retinal guanylyl cyclase 2 (GUCY2F) from Homo sapiens (Human).